The primary structure comprises 109 residues: Phosphoribosyl-ATP pyrophosphatase (109 aa).

The protein belongs to the PRA-PH family.

The protein resides in the cytoplasm. The enzyme catalyses 1-(5-phospho-beta-D-ribosyl)-ATP + H2O = 1-(5-phospho-beta-D-ribosyl)-5'-AMP + diphosphate + H(+). It functions in the pathway amino-acid biosynthesis; L-histidine biosynthesis; L-histidine from 5-phospho-alpha-D-ribose 1-diphosphate: step 2/9. This Azorhizobium caulinodans (strain ATCC 43989 / DSM 5975 / JCM 20966 / LMG 6465 / NBRC 14845 / NCIMB 13405 / ORS 571) protein is Phosphoribosyl-ATP pyrophosphatase.